Here is a 235-residue protein sequence, read N- to C-terminus: Small ribosomal subunit protein uS3 (235 aa).

One can recognise a KH type-2 domain in the interval 39-107; sequence VRKFLNKELA…PAQINIAEVK (69 aa). Residues 215–235 form a disordered region; that stretch reads AQPEQQPADKPKKAPRGKGRK.

This sequence belongs to the universal ribosomal protein uS3 family. As to quaternary structure, part of the 30S ribosomal subunit. Forms a tight complex with proteins S10 and S14.

In terms of biological role, binds the lower part of the 30S subunit head. Binds mRNA in the 70S ribosome, positioning it for translation. This Pasteurella multocida (strain Pm70) protein is Small ribosomal subunit protein uS3.